A 1192-amino-acid chain; its full sequence is Protein pangolin, isoform J (1192 aa).

Positions 351 to 357 (LGLPSEE) match the Nuclear localization signal motif. The interval 691–713 (AKHTSNAQSNESKETTNDKKKPH) is disordered. Residues 714–782 (IKKPLNAFML…LHMELYPGWS (69 aa)) constitute a DNA-binding region (HMG box). 4 disordered regions span residues 790 to 812 (VSKK…NMKK), 847 to 916 (PAED…SPST), 955 to 986 (QRPT…VSPV), and 1136 to 1192 (QLNN…ISVS). Residues 862-871 (SDDDEDDYDD) show a composition bias toward acidic residues. Composition is skewed to low complexity over residues 898-915 (SMPS…QSPS) and 957-986 (PTLV…VSPV). Polar residues-rich tracts occupy residues 1140 to 1162 (RTEN…VNSS) and 1170 to 1192 (SQAI…ISVS).

The protein belongs to the TCF/LEF family. In terms of assembly, binds to the beta-catenin homolog arm or to gro.

The protein localises to the nucleus. In terms of biological role, segment polarity protein. Functions together with arm to transduce the Wingless (Wg) signal in embryos and in developing adult tissues. Acts as a transcriptional activator, but in the absence of arm, it binds to gro and acts as a transcriptional repressor of wg-responsive genes. The protein is Protein pangolin, isoform J of Drosophila melanogaster (Fruit fly).